Reading from the N-terminus, the 368-residue chain is H-2 class I histocompatibility antigen, K-W28 alpha chain (368 aa).

A signal peptide spans methionine 1–alanine 21. Residues glycine 22–glycine 111 are alpha-1. Over glycine 22–threonine 305 the chain is Extracellular. N-linked (GlcNAc...) asparagine glycosylation occurs at asparagine 107. Positions glycine 112–threonine 203 are alpha-2. Cysteine 122 and cysteine 185 are oxidised to a cystine. Residue asparagine 197 is glycosylated (N-linked (GlcNAc...) asparagine). The interval aspartate 204–tryptophan 295 is alpha-3. The Ig-like C1-type domain occupies proline 206 to threonine 292. Cysteine 224 and cysteine 280 are disulfide-bonded. Positions glutamate 296 to threonine 305 are connecting peptide. The chain crosses the membrane as a helical span at residues valine 306 to methionine 329. Residues arginine 330–alanine 368 lie on the Cytoplasmic side of the membrane. 2 positions are modified to phosphoserine: serine 350 and serine 353.

It belongs to the MHC class I family. As to quaternary structure, heterodimer of an alpha chain and a beta chain (beta-2-microglobulin).

The protein resides in the membrane. In terms of biological role, involved in the presentation of foreign antigens to the immune system. This is H-2 class I histocompatibility antigen, K-W28 alpha chain (H2-K1) from Mus musculus (Mouse).